A 121-amino-acid chain; its full sequence is Large ribosomal subunit protein bL12 (121 aa).

It belongs to the bacterial ribosomal protein bL12 family. Homodimer. Part of the ribosomal stalk of the 50S ribosomal subunit. Forms a multimeric L10(L12)X complex, where L10 forms an elongated spine to which 2 to 4 L12 dimers bind in a sequential fashion. Binds GTP-bound translation factors.

Functionally, forms part of the ribosomal stalk which helps the ribosome interact with GTP-bound translation factors. Is thus essential for accurate translation. The protein is Large ribosomal subunit protein bL12 of Pseudomonas putida (strain GB-1).